The following is a 105-amino-acid chain: Large ribosomal subunit protein uL24 (105 aa).

This sequence belongs to the universal ribosomal protein uL24 family. Part of the 50S ribosomal subunit.

Functionally, one of two assembly initiator proteins, it binds directly to the 5'-end of the 23S rRNA, where it nucleates assembly of the 50S subunit. Its function is as follows. One of the proteins that surrounds the polypeptide exit tunnel on the outside of the subunit. The protein is Large ribosomal subunit protein uL24 of Clostridium botulinum (strain Langeland / NCTC 10281 / Type F).